Reading from the N-terminus, the 351-residue chain is Dihydroorotate dehydrogenase (quinone) (351 aa).

FMN is bound by residues 67–71 and Thr-91; that span reads AGFDK. Lys-71 serves as a coordination point for substrate. 116-120 contributes to the substrate binding site; that stretch reads NAMGF. FMN contacts are provided by Asn-145 and Asn-178. Residue Asn-178 participates in substrate binding. Ser-181 serves as the catalytic Nucleophile. Asn-183 contacts substrate. Lys-214 and Thr-242 together coordinate FMN. 243-244 is a binding site for substrate; that stretch reads NT. FMN contacts are provided by residues Gly-262, Gly-291, and 312-313; that span reads YS.

This sequence belongs to the dihydroorotate dehydrogenase family. Type 2 subfamily. Monomer. FMN is required as a cofactor.

The protein localises to the cell membrane. It carries out the reaction (S)-dihydroorotate + a quinone = orotate + a quinol. It functions in the pathway pyrimidine metabolism; UMP biosynthesis via de novo pathway; orotate from (S)-dihydroorotate (quinone route): step 1/1. Catalyzes the conversion of dihydroorotate to orotate with quinone as electron acceptor. This chain is Dihydroorotate dehydrogenase (quinone), found in Helicobacter acinonychis (strain Sheeba).